We begin with the raw amino-acid sequence, 352 residues long: Photosystem II D2 protein (352 aa).

At 1 to 31 the chain is on the cytoplasmic side; it reads MTIAVGRAPVERGWFDVLDDWLKRDRFVFIG. Residues 32 to 53 form a helical membrane-spanning segment; the sequence is WSGLLLFPCAFMALGGWLTGTT. Residues 54 to 108 lie on the Lumenal, thylakoid side of the membrane; it reads FVTSWYTHGLASSYLEGANFLTVAVSSPADAFGHSLLFLWGPEAQGNLTRWFQIG. The chain crosses the membrane as a helical span at residues 109–131; the sequence is GLWPFVALHGAFGLIGFMLRQFE. Histidine 117 lines the chlorophyll a pocket. Pheophytin a is bound at residue glutamine 129. The Cytoplasmic portion of the chain corresponds to 132–140; the sequence is ISRLVGIRP. A helical transmembrane segment spans residues 141 to 162; it reads YNAIAFSGPIAVFVSVFLMYPL. Asparagine 142 lines the pheophytin a pocket. Residues 163–190 are Lumenal, thylakoid-facing; sequence GQSSWFFAPSFGVAGIFRFILFLQGFHN. A helical membrane pass occupies residues 191–217; that stretch reads WTLNPFHMMGVAGILGGALLCAIHGAT. Histidine 197 is a binding site for chlorophyll a. A plastoquinone is bound by residues histidine 214 and phenylalanine 261. Residue histidine 214 participates in Fe cation binding. Over 218–265 the chain is Cytoplasmic; it reads VENTLFEDGEDSNTFRAFEPTQAEETYSMVTANRFWSQIFGIAFSNKR. Residues 266–288 traverse the membrane as a helical segment; that stretch reads WLHFFMLFVPVTGLWMSSVGIVG. Histidine 268 contacts Fe cation. Residues 289 to 352 are Lumenal, thylakoid-facing; that stretch reads LALNLRAYDF…EEVLPRGNAL (64 aa).

This sequence belongs to the reaction center PufL/M/PsbA/D family. As to quaternary structure, PSII is composed of 1 copy each of membrane proteins PsbA, PsbB, PsbC, PsbD, PsbE, PsbF, PsbH, PsbI, PsbJ, PsbK, PsbL, PsbM, PsbT, PsbX, PsbY, PsbZ, Psb30/Ycf12, peripheral proteins PsbO, CyanoQ (PsbQ), PsbU, PsbV and a large number of cofactors. It forms dimeric complexes. The D1/D2 heterodimer binds P680, chlorophylls that are the primary electron donor of PSII, and subsequent electron acceptors. It shares a non-heme iron and each subunit binds pheophytin, quinone, additional chlorophylls, carotenoids and lipids. There is also a Cl(-1) ion associated with D1 and D2, which is required for oxygen evolution. The PSII complex binds additional chlorophylls, carotenoids and specific lipids. is required as a cofactor.

The protein localises to the cellular thylakoid membrane. The enzyme catalyses 2 a plastoquinone + 4 hnu + 2 H2O = 2 a plastoquinol + O2. Its function is as follows. Photosystem II (PSII) is a light-driven water:plastoquinone oxidoreductase that uses light energy to abstract electrons from H(2)O, generating O(2) and a proton gradient subsequently used for ATP formation. It consists of a core antenna complex that captures photons, and an electron transfer chain that converts photonic excitation into a charge separation. The D1/D2 (PsbA/PsbD) reaction center heterodimer binds P680, the primary electron donor of PSII as well as several subsequent electron acceptors. D2 is needed for assembly of a stable PSII complex. The chain is Photosystem II D2 protein from Synechocystis sp. (strain ATCC 27184 / PCC 6803 / Kazusa).